The following is a 318-amino-acid chain: Isoflavone reductase (318 aa).

Residues 11 to 17, Arg-36, and Lys-44 each bind NADP(+); that span reads GATGAIG. Lys-144 (proton acceptor) is an active-site residue. Arg-148 is an NADP(+) binding site.

Belongs to the NmrA-type oxidoreductase family. Isoflavone reductase subfamily.

The catalysed reaction is (3R)-vestitone + NADP(+) = 2'-hydroxyformononetin + NADPH + 2 H(+). The protein operates within phytoalexin biosynthesis; pterocarpan phytoalexin biosynthesis. Reduces achiral isoflavones to chiral isoflavanones during the biosynthesis of chiral pterocarpan phytoalexins. The reduction product (sophrol) is a third isomer, which represents the penultimate intermediate in the synthesis of the phytoalexin (+)-pisatin, the major phytoalexin in pea. The polypeptide is Isoflavone reductase (IFR) (Pisum sativum (Garden pea)).